The primary structure comprises 69 residues: Putative membrane protein insertion efficiency factor (69 aa).

This sequence belongs to the UPF0161 family.

Its subcellular location is the cell membrane. Could be involved in insertion of integral membrane proteins into the membrane. The sequence is that of Putative membrane protein insertion efficiency factor from Thermoanaerobacter pseudethanolicus (strain ATCC 33223 / 39E) (Clostridium thermohydrosulfuricum).